The chain runs to 262 residues: MLTRYKMTMAYDGHLFHGFQLQPDQRTVQGTVEDALKKMTKGKRIIVQGSGRTDAGVHAIGQVIHFDYPGKEIPANRMILALNSMMPTDIVFTDCQIVDEDFHARYSIKGKWYRYRLSLDYFVNPFKRFYTGHFPYQLDLEKMRIAAQDLLGKHDFTSFAASGGQIKDKVRTIYYINITKDEKENEIVFDFIGSGFLYNMVRIMVAALLEIGNERRPLHDLRRVIAAKDRQEVRQTAQGSGLYLYHVFYDEIPQKYRQDQYL.

The active-site Nucleophile is Asp-54. Position 113 (Tyr-113) interacts with substrate.

This sequence belongs to the tRNA pseudouridine synthase TruA family. Homodimer.

It carries out the reaction uridine(38/39/40) in tRNA = pseudouridine(38/39/40) in tRNA. In terms of biological role, formation of pseudouridine at positions 38, 39 and 40 in the anticodon stem and loop of transfer RNAs. The chain is tRNA pseudouridine synthase A from Lactobacillus acidophilus (strain ATCC 700396 / NCK56 / N2 / NCFM).